We begin with the raw amino-acid sequence, 424 residues long: Serine hydroxymethyltransferase (424 aa).

(6S)-5,6,7,8-tetrahydrofolate is bound by residues Leu-126 and 130 to 132 (GHL). Lys-235 bears the N6-(pyridoxal phosphate)lysine mark. 359–361 (SPF) is a (6S)-5,6,7,8-tetrahydrofolate binding site.

Belongs to the SHMT family. Homodimer. The cofactor is pyridoxal 5'-phosphate.

The protein localises to the cytoplasm. The catalysed reaction is (6R)-5,10-methylene-5,6,7,8-tetrahydrofolate + glycine + H2O = (6S)-5,6,7,8-tetrahydrofolate + L-serine. The protein operates within one-carbon metabolism; tetrahydrofolate interconversion. Its pathway is amino-acid biosynthesis; glycine biosynthesis; glycine from L-serine: step 1/1. Catalyzes the reversible interconversion of serine and glycine with tetrahydrofolate (THF) serving as the one-carbon carrier. This reaction serves as the major source of one-carbon groups required for the biosynthesis of purines, thymidylate, methionine, and other important biomolecules. Also exhibits THF-independent aldolase activity toward beta-hydroxyamino acids, producing glycine and aldehydes, via a retro-aldol mechanism. The protein is Serine hydroxymethyltransferase of Prochlorococcus marinus (strain MIT 9303).